A 409-amino-acid polypeptide reads, in one-letter code: FAD-dependent monooxygenase phnB (409 aa).

4 residues coordinate FAD: E35, A50, R110, and D311.

The protein belongs to the paxM FAD-dependent monooxygenase family. It depends on FAD as a cofactor.

The enzyme catalyses 3,6,7,9-tetrahydroxy-3-methyl-2,3-dihydro-1H-naphtho[2,1-b]pyran-1-one + NADPH + O2 + H(+) = 2,3,4,7,9-pentahydroxy-6-methyl-1H-phenalen-1-one + NADP(+) + 2 H2O. It functions in the pathway secondary metabolite biosynthesis. FAD-dependent monooxygenase; part of the gene cluster that mediates the biosynthesis of phenalenones such as herqueinone, compounds that have been reported to treat tumors, bacterial infections and/or mycoses, and rheumatic diseases. The non-reducing polyketide synthase phnA synthesizes the heptaketide backbone and cyclizes it into the angular, hemiketal-containing naphtho-gamma-pyrone prephenalenone. The product template (PT) domain of phnA catalyzes only the C4-C9 aldol condensation, which is unprecedented among known PT domains. The transformation of prephenalenone to phenalenones requires an FAD-dependent monooxygenase phnB, which catalyzes the C2 aromatic hydroxylation of prephenalenone and ring opening of the gamma-pyrone ring simultaneously. Subsequent intramolecular deprotonation of C3 phenolic oxygen accelerates phenalenone ring closure to yield the tricyclic phenalenone core with a C2 hydroxylation. The prenyltransferase phnF further catalyzes reverse C-prenylation of phenalenone by direct electrophilic substitution at C6, or possibly via first a forward O-prenylation of a neighboring phenol in phenalenone, followed by a Claisen rearrangement. The hydroalkoxylation enzyme phnH catalyzes the 5-exo-trig cyclization via acid catalysis after the spontaneous deprotonation of 7-OH, which leads to the formation of the dihydrobenzofuran atrovenetin. Atrovenetin is further converted to deoxyherqueinone by the O-methyltransferase phnC which can methylate C2-OH to stabilize the northern portion of the phenalenone core. Finally, the oxidoreductase phnG converts deoxyherqueinone to herqueinone via C6 hydroxylation. This chain is FAD-dependent monooxygenase phnB, found in Penicillium herquei.